The following is a 100-amino-acid chain: NADH-quinone oxidoreductase subunit K (100 aa).

3 helical membrane passes run 2 to 22 (ITLS…LIGI), 29 to 49 (IMLF…LAAI), and 63 to 83 (LFIV…LILW).

It belongs to the complex I subunit 4L family. As to quaternary structure, NDH-1 is composed of 14 different subunits. Subunits NuoA, H, J, K, L, M, N constitute the membrane sector of the complex.

The protein resides in the cell inner membrane. It catalyses the reaction a quinone + NADH + 5 H(+)(in) = a quinol + NAD(+) + 4 H(+)(out). Functionally, NDH-1 shuttles electrons from NADH, via FMN and iron-sulfur (Fe-S) centers, to quinones in the respiratory chain. The immediate electron acceptor for the enzyme in this species is believed to be ubiquinone. Couples the redox reaction to proton translocation (for every two electrons transferred, four hydrogen ions are translocated across the cytoplasmic membrane), and thus conserves the redox energy in a proton gradient. The polypeptide is NADH-quinone oxidoreductase subunit K (Campylobacter curvus (strain 525.92)).